The sequence spans 144 residues: 3-hydroxyacyl-[acyl-carrier-protein] dehydratase FabZ (144 aa).

H51 is a catalytic residue.

It belongs to the thioester dehydratase family. FabZ subfamily.

It is found in the cytoplasm. It carries out the reaction a (3R)-hydroxyacyl-[ACP] = a (2E)-enoyl-[ACP] + H2O. In terms of biological role, involved in unsaturated fatty acids biosynthesis. Catalyzes the dehydration of short chain beta-hydroxyacyl-ACPs and long chain saturated and unsaturated beta-hydroxyacyl-ACPs. The protein is 3-hydroxyacyl-[acyl-carrier-protein] dehydratase FabZ of Clostridium botulinum (strain Okra / Type B1).